A 288-amino-acid chain; its full sequence is MKLAVYGKGGIGKSTTSCNISIALARRGKKVLQIGCDPKHDSTFTLTGFLIPTIIDTLQAKDYHYENVWPEDVIYQGYGGVDCVEAGGPPAGAGCGGYVVGETVKLLKELNAFYEYDIILFDVLGDVVCGGFAAPLNYADYCLIVTDNGFDALFAANRIAASVREKARTHPLRLAGLVANRTTKRDLIDKYVQVCPIPVLEVLPLLEDIRVSRVKGKTLFEMAESEPDLSFVLDYYLNIADQLLTEPEGVVPRELGDRELFSLLSDFYLNIENQTSVNKTEKLDFFLV.

Residues 10-15 (GIGKST) and lysine 39 each bind ATP. Serine 14 lines the Mg(2+) pocket. 2 residues coordinate [4Fe-4S] cluster: cysteine 95 and cysteine 129. Residues 180-181 (NR) and 204-206 (PLL) each bind ATP.

It belongs to the NifH/BchL/ChlL family. In terms of assembly, homodimer. Protochlorophyllide reductase is composed of three subunits; ChlL, ChlN and ChlB. Requires [4Fe-4S] cluster as cofactor.

It is found in the plastid. The protein resides in the chloroplast. The enzyme catalyses chlorophyllide a + oxidized 2[4Fe-4S]-[ferredoxin] + 2 ADP + 2 phosphate = protochlorophyllide a + reduced 2[4Fe-4S]-[ferredoxin] + 2 ATP + 2 H2O. Its pathway is porphyrin-containing compound metabolism; chlorophyll biosynthesis (light-independent). In terms of biological role, component of the dark-operative protochlorophyllide reductase (DPOR) that uses Mg-ATP and reduced ferredoxin to reduce ring D of protochlorophyllide (Pchlide) to form chlorophyllide a (Chlide). This reaction is light-independent. The L component serves as a unique electron donor to the NB-component of the complex, and binds Mg-ATP. This Stigeoclonium helveticum (Green alga) protein is Light-independent protochlorophyllide reductase iron-sulfur ATP-binding protein.